The sequence spans 246 residues: uncharacterized protein (246 aa).

Position 10–34 (V10–V34) interacts with NADP(+). S140 provides a ligand contact to substrate. The active-site Proton acceptor is the Y153.

Belongs to the short-chain dehydrogenases/reductases (SDR) family.

This is an uncharacterized protein from Staphylococcus saprophyticus subsp. saprophyticus (strain ATCC 15305 / DSM 20229 / NCIMB 8711 / NCTC 7292 / S-41).